The sequence spans 437 residues: Chaperone SurA (437 aa).

An N-terminal signal peptide occupies residues 1–27 (MHNHVFKTIARHGLIALFFFFSISAMA). PpiC domains follow at residues 179 to 280 (QDEF…KLLN) and 290 to 388 (VDQT…QVLE).

It localises to the periplasm. The enzyme catalyses [protein]-peptidylproline (omega=180) = [protein]-peptidylproline (omega=0). Chaperone involved in the correct folding and assembly of outer membrane proteins. Recognizes specific patterns of aromatic residues and the orientation of their side chains, which are found more frequently in integral outer membrane proteins. May act in both early periplasmic and late outer membrane-associated steps of protein maturation. This chain is Chaperone SurA, found in Methylobacillus flagellatus (strain ATCC 51484 / DSM 6875 / VKM B-1610 / KT).